The primary structure comprises 161 residues: Putative esterase C31F10.02 (161 aa).

It belongs to the thioesterase PaaI family.

This chain is Putative esterase C31F10.02, found in Schizosaccharomyces pombe (strain 972 / ATCC 24843) (Fission yeast).